The sequence spans 235 residues: Leucyl/phenylalanyl-tRNA--protein transferase (235 aa).

The protein belongs to the L/F-transferase family.

The protein resides in the cytoplasm. The catalysed reaction is N-terminal L-lysyl-[protein] + L-leucyl-tRNA(Leu) = N-terminal L-leucyl-L-lysyl-[protein] + tRNA(Leu) + H(+). It carries out the reaction N-terminal L-arginyl-[protein] + L-leucyl-tRNA(Leu) = N-terminal L-leucyl-L-arginyl-[protein] + tRNA(Leu) + H(+). The enzyme catalyses L-phenylalanyl-tRNA(Phe) + an N-terminal L-alpha-aminoacyl-[protein] = an N-terminal L-phenylalanyl-L-alpha-aminoacyl-[protein] + tRNA(Phe). In terms of biological role, functions in the N-end rule pathway of protein degradation where it conjugates Leu, Phe and, less efficiently, Met from aminoacyl-tRNAs to the N-termini of proteins containing an N-terminal arginine or lysine. This is Leucyl/phenylalanyl-tRNA--protein transferase from Shewanella frigidimarina (strain NCIMB 400).